A 400-amino-acid polypeptide reads, in one-letter code: Acetate kinase (400 aa).

Asparagine 10 lines the Mg(2+) pocket. Residue lysine 17 coordinates ATP. Residue arginine 89 coordinates substrate. Aspartate 148 serves as the catalytic Proton donor/acceptor. ATP contacts are provided by residues 208–212 (HLGNG), 283–285 (DCR), and 331–335 (GIGEN). Glutamate 385 provides a ligand contact to Mg(2+).

It belongs to the acetokinase family. In terms of assembly, homodimer. Requires Mg(2+) as cofactor. The cofactor is Mn(2+).

The protein localises to the cytoplasm. The enzyme catalyses acetate + ATP = acetyl phosphate + ADP. Its pathway is metabolic intermediate biosynthesis; acetyl-CoA biosynthesis; acetyl-CoA from acetate: step 1/2. In terms of biological role, catalyzes the formation of acetyl phosphate from acetate and ATP. Can also catalyze the reverse reaction. The sequence is that of Acetate kinase from Haemophilus ducreyi (strain 35000HP / ATCC 700724).